A 304-amino-acid polypeptide reads, in one-letter code: Small ribosomal subunit protein uS3 (304 aa).

A KH type-2 domain is found at 17 to 86; it reads MDEYFAKQLS…NPQIDAQEVK (70 aa).

Belongs to the universal ribosomal protein uS3 family. Part of the 30S ribosomal subunit.

Its function is as follows. Binds the lower part of the 30S subunit head. The sequence is that of Small ribosomal subunit protein uS3 from Methanococcoides burtonii (strain DSM 6242 / NBRC 107633 / OCM 468 / ACE-M).